The sequence spans 149 residues: Large ribosomal subunit protein bL9 (149 aa).

It belongs to the bacterial ribosomal protein bL9 family.

Functionally, binds to the 23S rRNA. This chain is Large ribosomal subunit protein bL9, found in Endomicrobium trichonymphae.